A 925-amino-acid chain; its full sequence is Bifunctional uridylyltransferase/uridylyl-removing enzyme (925 aa).

Positions 1-382 (MVLPTTKDAT…PPGAEVRRVP (382 aa)) are uridylyltransferase. Residues 383–738 (DSDDFIIDNN…VGFDEARGVT (356 aa)) are uridylyl-removing. The region spanning 498 to 621 (VDEHLIRCIG…VQSVERMKLL (124 aa)) is the HD domain. 2 consecutive ACT domains span residues 739 to 820 (ELTI…DVMP) and 849 to 925 (MIEV…NTAE).

The protein belongs to the GlnD family. Requires Mg(2+) as cofactor.

It catalyses the reaction [protein-PII]-L-tyrosine + UTP = [protein-PII]-uridylyl-L-tyrosine + diphosphate. The catalysed reaction is [protein-PII]-uridylyl-L-tyrosine + H2O = [protein-PII]-L-tyrosine + UMP + H(+). Its activity is regulated as follows. Uridylyltransferase (UTase) activity is inhibited by glutamine, while glutamine activates uridylyl-removing (UR) activity. In terms of biological role, modifies, by uridylylation and deuridylylation, the PII regulatory proteins (GlnB and homologs), in response to the nitrogen status of the cell that GlnD senses through the glutamine level. Under low glutamine levels, catalyzes the conversion of the PII proteins and UTP to PII-UMP and PPi, while under higher glutamine levels, GlnD hydrolyzes PII-UMP to PII and UMP (deuridylylation). Thus, controls uridylylation state and activity of the PII proteins, and plays an important role in the regulation of nitrogen assimilation and metabolism. This chain is Bifunctional uridylyltransferase/uridylyl-removing enzyme, found in Nitrobacter winogradskyi (strain ATCC 25391 / DSM 10237 / CIP 104748 / NCIMB 11846 / Nb-255).